The sequence spans 458 residues: Type III intermediate filament (458 aa).

The interval 1–100 (MEKGYKMNRS…KVNRTNEKAE (100 aa)) is head. The IF rod domain occupies 97 to 405 (EKAEMIELND…KLLEGEENRI (309 aa)). Positions 406–458 (SMPLPSFGSMSLSDAMFEQQPFENRTSKKKIVIKTVETSGGDVISETTQKIED) are tail.

This sequence belongs to the intermediate filament family.

In Tetronarce californica (Pacific electric ray), this protein is Type III intermediate filament.